We begin with the raw amino-acid sequence, 186 residues long: Ribosome-recycling factor (186 aa).

The protein belongs to the RRF family.

The protein localises to the cytoplasm. Responsible for the release of ribosomes from messenger RNA at the termination of protein biosynthesis. May increase the efficiency of translation by recycling ribosomes from one round of translation to another. This chain is Ribosome-recycling factor, found in Burkholderia cenocepacia (strain HI2424).